Reading from the N-terminus, the 335-residue chain is 3-hydroxyproline 2-epimerase (335 aa).

Cys-91 serves as the catalytic Proton acceptor. Substrate contacts are provided by residues 92–93 (GH), Asp-251, and 256–257 (GS).

It belongs to the proline racemase family.

It carries out the reaction trans-3-hydroxy-L-proline = cis-3-hydroxy-D-proline. The enzyme catalyses trans-4-hydroxy-L-proline = cis-4-hydroxy-D-proline. In terms of biological role, catalyzes the epimerization of trans-3-hydroxy-L-proline (t3LHyp) to cis-3-hydroxy-D-proline (c3DHyp) in vitro. Can also catalyze the epimerization of trans-4-hydroxy-L-proline (t3LHyp) to cis-4-hydroxy-D-proline (c4DHyp), albeit with 3.6-fold lower efficiency. Displays no proline racemase activity. In Burkholderia multivorans (strain ATCC 17616 / 249), this protein is 3-hydroxyproline 2-epimerase.